Consider the following 334-residue polypeptide: MYSKQWTRIILITSPFAIALSLLLSILYGAKHLSTDIVFTSLIHFDPGNTDHQIIWHSRIPRAAGALLIGAALAVSGALMQGITRNYLASPSIMGVSDGSAFIITLCMVLLPQSSSIEMMIYSFIGSALGAVLVFGLAAMMPNGFTPVQLAIIGTVTSMLLSSLSAAMSIYFQISQDLSFWYSARLHQMSPDFLKLAAPFFLIGIIMAISLSKKVTAVSLGDDISKSLGQKKKTIKIMAMLSVIILTGSAVALAGKIAFVGLVVPHITRFLVGSDYSRLIPCSCILGGIFLTLCDLASRFINYPFETPIEVVTSIIGVPFFLYLIKRKGGEQNG.

The next 9 membrane-spanning stretches (helical) occupy residues 9 to 29 (IILITSPFAIALSLLLSILYG), 63 to 83 (AAGALLIGAALAVSGALMQGI), 91 to 111 (PSIMGVSDGSAFIITLCMVLL), 119 to 139 (MMIYSFIGSALGAVLVFGLAA), 150 to 170 (LAIIGTVTSMLLSSLSAAMSI), 191 to 211 (PDFLKLAAPFFLIGIIMAISL), 243 to 263 (VIILTGSAVALAGKIAFVGLV), 281 to 301 (PCSCILGGIFLTLCDLASRFI), and 305 to 325 (FETPIEVVTSIIGVPFFLYLI).

Belongs to the binding-protein-dependent transport system permease family. FecCD subfamily. The complex is composed of one ATP-binding protein (YusV), two transmembrane proteins (FeuB and FeuC) and a solute-binding protein (FeuA).

It is found in the cell membrane. The protein resides in the membrane raft. Functionally, involved in the uptake of iron. Probably responsible for the translocation of the substrate across the membrane. In terms of biological role, part of the ABC transporter complex FeuABC/YusV involved in import of the catecholate siderophores bacillibactin and enterobactin. The polypeptide is Iron-uptake system permease protein FeuB (feuB) (Bacillus subtilis (strain 168)).